A 320-amino-acid chain; its full sequence is Lipoyl synthase (320 aa).

[4Fe-4S] cluster contacts are provided by Cys-67, Cys-72, Cys-78, Cys-93, Cys-97, Cys-100, and Ser-307. Residues 79 to 296 (FNHGTATFMI…RDKAQAMGFE (218 aa)) enclose the Radical SAM core domain.

The protein belongs to the radical SAM superfamily. Lipoyl synthase family. [4Fe-4S] cluster is required as a cofactor.

The protein resides in the cytoplasm. It catalyses the reaction [[Fe-S] cluster scaffold protein carrying a second [4Fe-4S](2+) cluster] + N(6)-octanoyl-L-lysyl-[protein] + 2 oxidized [2Fe-2S]-[ferredoxin] + 2 S-adenosyl-L-methionine + 4 H(+) = [[Fe-S] cluster scaffold protein] + N(6)-[(R)-dihydrolipoyl]-L-lysyl-[protein] + 4 Fe(3+) + 2 hydrogen sulfide + 2 5'-deoxyadenosine + 2 L-methionine + 2 reduced [2Fe-2S]-[ferredoxin]. Its pathway is protein modification; protein lipoylation via endogenous pathway; protein N(6)-(lipoyl)lysine from octanoyl-[acyl-carrier-protein]: step 2/2. Functionally, catalyzes the radical-mediated insertion of two sulfur atoms into the C-6 and C-8 positions of the octanoyl moiety bound to the lipoyl domains of lipoate-dependent enzymes, thereby converting the octanoylated domains into lipoylated derivatives. The chain is Lipoyl synthase from Pasteurella multocida (strain Pm70).